Consider the following 489-residue polypeptide: Rhamnulokinase (489 aa).

Residue 13-17 (ASSGR) participates in ATP binding. C68 and C222 are oxidised to a cystine. Residues G83 and 236-238 (HDT) contribute to the substrate site. D237 serves as the catalytic Proton acceptor. T259 provides a ligand contact to ATP. Position 296 (N296) interacts with substrate. Q304 is an ATP binding site. A disulfide bond links C353 and C370. G402 contributes to the ATP binding site. Cysteines 413 and 417 form a disulfide.

Belongs to the rhamnulokinase family. Requires Mg(2+) as cofactor.

The enzyme catalyses L-rhamnulose + ATP = L-rhamnulose 1-phosphate + ADP + H(+). It participates in carbohydrate degradation; L-rhamnose degradation; glycerone phosphate from L-rhamnose: step 2/3. Involved in the catabolism of L-rhamnose (6-deoxy-L-mannose). Catalyzes the transfer of the gamma-phosphate group from ATP to the 1-hydroxyl group of L-rhamnulose to yield L-rhamnulose 1-phosphate. The polypeptide is Rhamnulokinase (Salmonella paratyphi B (strain ATCC BAA-1250 / SPB7)).